We begin with the raw amino-acid sequence, 812 residues long: Protein let-653 (812 aa).

An N-terminal signal peptide occupies residues 1–21 (MRHPLISLLLLIAFYSTSSEA). Apple domains follow at residues 26-116 (CNSF…WKYC) and 123-209 (CSGE…ENNC). 6 cysteine pairs are disulfide-bonded: Cys-26–Cys-116, Cys-53–Cys-88, Cys-57–Cys-72, Cys-123–Cys-209, Cys-154–Cys-178, and Cys-158–Cys-166. N-linked (GlcNAc...) asparagine glycans are attached at residues Asn-172, Asn-211, and Asn-272. The ZP domain occupies 221-725 (ECRDNGISVS…NTCDDVEGCD (505 aa)). Composition is skewed to low complexity over residues 375-449 (QVTT…STTT) and 496-584 (PTTT…PASS). 2 disordered regions span residues 375–461 (QVTT…STIM) and 494–584 (DVPT…PASS). An N-linked (GlcNAc...) asparagine glycan is attached at Asn-771.

Cleaved at the C-terminal domain. As to expression, expressed in external cuticle-producing epithelial cells including the epidermis, vulva, rectum, excretory duct and excretory pore.

Its subcellular location is the apical cell membrane. It localises to the secreted. The protein resides in the extracellular space. Functionally, required for epithelial tube development and shaping. Involved in the morphogenesis and function of the three unicellular tubes of the excretory system, the canal cell, the duct cell and the pore cell. Also plays a role in cuticle development, alae formation and shaping of the vulval lumen. Required for larval development. In Caenorhabditis elegans, this protein is Protein let-653.